The primary structure comprises 104 residues: Flagellar hook-basal body complex protein FliE (104 aa).

This sequence belongs to the FliE family.

It is found in the bacterial flagellum basal body. This is Flagellar hook-basal body complex protein FliE from Pectobacterium atrosepticum (strain SCRI 1043 / ATCC BAA-672) (Erwinia carotovora subsp. atroseptica).